The primary structure comprises 781 residues: Pyrin (781 aa).

The Pyrin domain occupies 1–92 (MAKTPSDHLL…AEELHRAAIQ (92 aa)). Over residues 93–111 (EYSTQENGTDDSAASSSLG) the composition is skewed to polar residues. The segment at 93–226 (EYSTQENGTD…AGGAPGQKEC (134 aa)) is disordered. A compositionally biased stretch (basic and acidic residues) spans 113–126 (NKPRSLKTPDHPEG). The span at 153–163 (LSRKPLSKRRE) shows a compositional bias: basic residues. Position 242 is a phosphoserine (serine 242). Positions 266–280 (KTAANLDSATEPRAR) are interaction with RELA. Disordered regions lie at residues 270 to 322 (NLDS…EGDP) and 336 to 373 (EAVS…QPLP). The B box-type zinc finger occupies 370 to 412 (QPLPQCKRHLKQVQLLFCEDHDEPICLICSLSQEHQGHRVRPI). Residues 413–442 (EEVALEHKKKIQKQLEHLKKLRKSGEEQRS) adopt a coiled-coil conformation. The Nuclear localization signal signature appears at 420–437 (KKKIQKQLEHLKKLRKSG). A required for homotrimerization and induction of pyroptosomes region spans residues 420–582 (KKKIQKQLEH…YFSETLRSEM (163 aa)). A B30.2/SPRY domain is found at 580–775 (SEMEMFNVPE…NTAPLTICPV (196 aa)).

Homotrimer. Interacts (via the B box-type zinc finger) with PSTPIP1. Interacts (via the B30.2/SPRY domain) with several components of the inflammasome complex, including CASP1 p20 and p10 subunits, CASP5, PYCARD, NLRP1, NLRP2 and NLRP3, as well as with unprocessed IL1B; this interaction may lead to autophagic degradation of these proteins. Component of the AIM2 PANoptosome complex, a multiprotein complex that drives inflammatory cell death (PANoptosis). Interacts with NFKBIA and RELA. Interacts weakly with VASP and ACTR3. Interacts with active ULK1 (phosphorylated on 'Ser-317') and BECN1 simultaneously. Also interacts with ATG16L1 (via WD repeats), and with ATG8 family members, including GABARAP, GABARAPL1 and, to a lesser extent, GABARAPL2, MAP1LC3A/LC3A and MAP1LC3C/LC3C. Interacts with TRIM21. Interacts with YWHAB, YWHAE, YWHAG, YWHAH, YWHAQ and YWHAZ; the interaction is required for the down-regulation of pyrin pro-inflammatory activity. In terms of processing, cleaved by CASP1. The N-terminal cleavage product localizes to the nucleus as a filamentous network and to the cytoplasm, interacts more strongly with RELA and NFKBIA than the full-length protein, enhances the nuclear localization of RELA and induces NFKBIA proteolysis. The C-terminal cleavage product localizes to the cytoplasm. Phosphorylation at Ser-242 is required for the interaction with 14-3-3 proteins and down-regulation of pyrin pro-inflammatory activity. Post-translationally, degraded along with the delivery of its substrates to autolysosomal compartments (at protein level). In terms of tissue distribution, expressed in peripheral blood leukocytes, particularly in mature granulocytes and to a lesser extent in monocytes but not in lymphocytes. Detected in spleen, lung and muscle, probably as a result of leukocyte infiltration in these tissues. Not expressed in thymus, prostate, testis, ovary, small intestine, colon, heart, brain, placenta, liver, kidney, pancreas. Expression detected in several myeloid leukemic, colon cancer, and prostate cancer cell lines.

It is found in the cytoplasm. The protein resides in the cytoskeleton. The protein localises to the cell projection. It localises to the ruffle. Its subcellular location is the lamellipodium. It is found in the nucleus. The protein resides in the cytoplasmic vesicle. The protein localises to the autophagosome. Its function is as follows. Involved in the regulation of innate immunity and the inflammatory response in response to IFNG/IFN-gamma. Organizes autophagic machinery by serving as a platform for the assembly of ULK1, Beclin 1/BECN1, ATG16L1, and ATG8 family members and recognizes specific autophagy targets, thus coordinating target recognition with assembly of the autophagic apparatus and initiation of autophagy. Acts as an autophagy receptor for the degradation of several inflammasome components, including CASP1, NLRP1 and NLRP3, hence preventing excessive IL1B- and IL18-mediated inflammation. However, it can also have a positive effect in the inflammatory pathway, acting as an innate immune sensor that triggers PYCARD/ASC specks formation, caspase-1 activation, and IL1B and IL18 production. Together with AIM2, also acts as a mediator of pyroptosis, necroptosis and apoptosis (PANoptosis), an integral part of host defense against pathogens, in response to bacterial infection. It is required for PSTPIP1-induced PYCARD/ASC oligomerization and inflammasome formation. Recruits PSTPIP1 to inflammasomes, and is required for PSTPIP1 oligomerization. The polypeptide is Pyrin (Homo sapiens (Human)).